A 280-amino-acid chain; its full sequence is Probable endonuclease 4 (280 aa).

The Zn(2+) site is built by histidine 69, histidine 109, glutamate 145, aspartate 179, histidine 182, histidine 216, aspartate 229, histidine 231, and glutamate 261.

Belongs to the AP endonuclease 2 family. It depends on Zn(2+) as a cofactor.

It catalyses the reaction Endonucleolytic cleavage to 5'-phosphooligonucleotide end-products.. Functionally, endonuclease IV plays a role in DNA repair. It cleaves phosphodiester bonds at apurinic or apyrimidinic (AP) sites, generating a 3'-hydroxyl group and a 5'-terminal sugar phosphate. This is Probable endonuclease 4 from Actinobacillus pleuropneumoniae serotype 5b (strain L20).